The sequence spans 188 residues: Sulfopyruvate decarboxylase subunit beta (188 aa).

Belongs to the TPP enzyme family. As to quaternary structure, heterododecamer composed of 6 subunits alpha and 6 subunits beta. The cofactor is thiamine diphosphate.

It catalyses the reaction 3-sulfopyruvate + H(+) = sulfoacetaldehyde + CO2. It participates in cofactor biosynthesis; coenzyme M biosynthesis; sulfoacetaldehyde from phosphoenolpyruvate and sulfite: step 4/4. With respect to regulation, inhibited by oxygen when heated in air at 80 degrees Celsius. The enzyme is reactivated by addition of dithionite. Involved in the biosynthesis of the coenzyme M (2-mercaptoethanesulfonic acid). Catalyzes the decarboxylation of sulfopyruvate to sulfoacetaldehyde. The protein is Sulfopyruvate decarboxylase subunit beta of Methanocaldococcus jannaschii (strain ATCC 43067 / DSM 2661 / JAL-1 / JCM 10045 / NBRC 100440) (Methanococcus jannaschii).